Reading from the N-terminus, the 173-residue chain is Alpha-crystallin A chain (173 aa).

Met-1 bears the N-acetylmethionine mark. Positions 1-63 are required for complex formation with BFSP1 and BFSP2; sequence MDIAIQHPWF…RTVLDSGISE (63 aa). Deamidated glutamine; partial is present on Gln-6. Ser-45 is modified (phosphoserine). Gln-50 is subject to Deamidated glutamine; partial. The 111-residue stretch at 52 to 162 folds into the sHSP domain; it reads LFRTVLDSGI…GHSERAIPVS (111 aa). At Lys-70 the chain carries N6-acetyllysine. Deamidated glutamine; partial is present on Gln-90. Lys-99 is subject to N6-acetyllysine. His-100 is a binding site for Zn(2+). Asn-101 carries the deamidated asparagine; partial modification. Zn(2+) is bound by residues Glu-102 and His-107. Ser-122 is modified (phosphoserine). Asn-123 bears the Deamidated asparagine; partial mark. Positions 144-173 are disordered; the sequence is PKIPSGVDAGHSERAIPVSREEKPSSAPSS. Residues 153 to 167 show a composition bias toward basic and acidic residues; that stretch reads GHSERAIPVSREEKP. Residue His-154 participates in Zn(2+) binding. Ser-162 carries an O-linked (GlcNAc) serine glycan.

It belongs to the small heat shock protein (HSP20) family. As to quaternary structure, heteromer composed of three CRYAA and one CRYAB subunits. Inter-subunit bridging via zinc ions enhances stability, which is crucial as there is no protein turn over in the lens. Can also form homodimers and homotetramers (dimers of dimers) which serve as the building blocks of homooligomers. Within homooligomers, the zinc-binding motif is created from residues of 3 different molecules. His-100 and Glu-102 from one molecule are ligands of the zinc ion, and His-107 and His-154 residues from additional molecules complete the site with tetrahedral coordination geometry. Part of a complex required for lens intermediate filament formation composed of BFSP1, BFSP2 and CRYAA. Acetylation at Lys-70 may increase chaperone activity. In terms of processing, undergoes age-dependent proteolytical cleavage at the C-terminus.

It is found in the cytoplasm. It localises to the nucleus. In terms of biological role, contributes to the transparency and refractive index of the lens. Acts as a chaperone, preventing aggregation of various proteins under a wide range of stress conditions. Required for the correct formation of lens intermediate filaments as part of a complex composed of BFSP1, BFSP2 and CRYAA. In Giraffa camelopardalis (Giraffe), this protein is Alpha-crystallin A chain (CRYAA).